The chain runs to 399 residues: La protein 2 (399 aa).

Positions 3 to 106 (SSFNEETAKK…GRGTKLSKPE (104 aa)) constitute an HTH La-type RNA-binding domain. One can recognise an RRM domain in the interval 115-192 (RTLAASPFEY…ADLVLIPKSD (78 aa)). The xRRM domain maps to 269–399 (SLCKDNTDQL…QPTKKARKEP (131 aa)). The segment at 367–399 (AELEGGKEGHKKEKGKDECFENVQPTKKARKEP) is disordered. Residues 370-385 (EGGKEGHKKEKGKDEC) show a composition bias toward basic and acidic residues.

In terms of tissue distribution, expressed ubiquitously (at protein level).

It localises to the nucleus. Its subcellular location is the nucleoplasm. The protein resides in the nucleolus. Its function is as follows. Binds to the 3' poly(U) terminus of nascent RNA polymerase III transcripts, protecting them from exonuclease digestion and facilitating their folding and maturation. The protein is La protein 2 (LA2) of Arabidopsis thaliana (Mouse-ear cress).